The primary structure comprises 282 residues: Endonuclease V (282 aa).

Positions 52 and 126 each coordinate Mg(2+). The segment at 250 to 282 (SLGLPGPPTPRSPKAQRPVACPKGDSGESSALC) is disordered.

It belongs to the endonuclease V family. In terms of assembly, monomer. Interacts with PABPC1; the interaction is RNA-dependent and stimulates ENDOV activity. Mg(2+) serves as cofactor.

It is found in the cytoplasm. The protein localises to the nucleus. Its subcellular location is the nucleolus. The protein resides in the stress granule. Its activity is regulated as follows. Inhibited by normal intracellular concentrations of ATP. Its function is as follows. Endoribonuclease that specifically cleaves inosine-containing RNAs: cleaves RNA at the second phosphodiester bond 3' to inosine. Active against both single-stranded and double-stranded RNAs. Has strong preference for single-stranded RNAs (ssRNAs) toward double-stranded RNAs (dsRNAs). Cleaves mRNAs and tRNAs containing inosine. Also able to cleave structure-specific dsRNA substrates containing the specific sites 5'-IIUI-3' and 5'-UIUU-3'. Inosine is present in a number of RNAs following editing; the function of inosine-specific endoribonuclease is still unclear: it could either play a regulatory role in edited RNAs, or be involved in antiviral response by removing the hyperedited long viral dsRNA genome that has undergone A-to-I editing. Binds branched DNA structures. Functionally, endoribonuclease that specifically cleaves inosine-containing RNAs: cleaves RNA at the second phosphodiester bond 3' to inosine. Active against both single-stranded and double-stranded RNAs. Cleaves tRNAs containing inosine. This chain is Endonuclease V (ENDOV), found in Homo sapiens (Human).